Consider the following 152-residue polypeptide: Nucleoside diphosphate kinase (152 aa).

The ATP site is built by lysine 10, phenylalanine 58, arginine 86, threonine 92, arginine 103, and asparagine 113. Histidine 116 functions as the Pros-phosphohistidine intermediate in the catalytic mechanism.

Belongs to the NDK family. The cofactor is Mg(2+).

Its subcellular location is the cytoplasm. The catalysed reaction is a 2'-deoxyribonucleoside 5'-diphosphate + ATP = a 2'-deoxyribonucleoside 5'-triphosphate + ADP. The enzyme catalyses a ribonucleoside 5'-diphosphate + ATP = a ribonucleoside 5'-triphosphate + ADP. Major role in the synthesis of nucleoside triphosphates other than ATP. The ATP gamma phosphate is transferred to the NDP beta phosphate via a ping-pong mechanism, using a phosphorylated active-site intermediate. This is Nucleoside diphosphate kinase from Methanosphaera stadtmanae (strain ATCC 43021 / DSM 3091 / JCM 11832 / MCB-3).